Reading from the N-terminus, the 239-residue chain is tRNA (guanine-N(1)-)-methyltransferase (239 aa).

S-adenosyl-L-methionine is bound by residues G109 and 128–133; that span reads IGDYVL.

This sequence belongs to the RNA methyltransferase TrmD family. As to quaternary structure, homodimer.

It is found in the cytoplasm. It catalyses the reaction guanosine(37) in tRNA + S-adenosyl-L-methionine = N(1)-methylguanosine(37) in tRNA + S-adenosyl-L-homocysteine + H(+). Functionally, specifically methylates guanosine-37 in various tRNAs. The protein is tRNA (guanine-N(1)-)-methyltransferase of Thermus thermophilus (strain ATCC 27634 / DSM 579 / HB8).